The sequence spans 135 residues: MKRVGILNSTISEMVANMGHTDMLAIVDMGFPIPDGAKKVDLVVDKGKPGLLEVVEVILKELEVEKIILAEEMNEKNPETRDLLINLVGKNNSNVKIEFVPHEEFKKISRTSKGFVRTGADRPYSNVILVSGVIF.

The active-site Proton donor is the histidine 20. Residues aspartate 28, histidine 102, and 124-126 (YSN) contribute to the substrate site.

Belongs to the RbsD / FucU family. RbsD subfamily. Homodecamer.

Its subcellular location is the cytoplasm. It catalyses the reaction beta-D-ribopyranose = beta-D-ribofuranose. It participates in carbohydrate metabolism; D-ribose degradation; D-ribose 5-phosphate from beta-D-ribopyranose: step 1/2. In terms of biological role, catalyzes the interconversion of beta-pyran and beta-furan forms of D-ribose. This Thermotoga petrophila (strain ATCC BAA-488 / DSM 13995 / JCM 10881 / RKU-1) protein is D-ribose pyranase.